A 163-amino-acid polypeptide reads, in one-letter code: Calcium-binding protein I (163 aa).

EF-hand domains are found at residues 20–42 (DKNKDRQYSIDEIVQLLKKNSKN), 82–117 (KPEIDIESFLLRFDKNNDKMISHHELKTKLDELGCG), and 118–153 (NSKKTTDYVFEQIDTNKEGSLSYEDLEGFVKFLKQD). The Ca(2+) site is built by D95, N97, D99, M101, E106, D131, N133, E135, S137, and D142.

This Dictyostelium discoideum (Social amoeba) protein is Calcium-binding protein I (cbpI).